The sequence spans 593 residues: ABC1 family protein lscO (593 aa).

2 disordered regions span residues 1–29 (MDVAFPGMERHDEKNPPGDDGTKPTGGKK) and 441–467 (PYKNPSSSDDESGESWQRTKETPEERK). Basic and acidic residues-rich tracts occupy residues 8 to 22 (MERHDEKNPPGDDGT) and 457 to 467 (QRTKETPEERK).

Belongs to the protein kinase superfamily. ADCK protein kinase family.

Its function is as follows. ABC1 family protein; part of the gene cluster that mediates the biosynthesis of the lipopeptide antibiotics leucinostatins that show extensive biological activities, including antimalarial, antiviral, antibacterial, antifungal, and antitumor activities, as well as phytotoxic. The function of lcsO within the leucinostatins biosynthesis has not been identified yet. The protein is ABC1 family protein lscO of Purpureocillium lilacinum (Paecilomyces lilacinus).